The following is a 218-amino-acid chain: Pyridoxine/pyridoxamine 5'-phosphate oxidase (218 aa).

Substrate is bound by residues 14–17 and Lys72; that span reads RREY. FMN contacts are provided by residues 67-72, 82-83, Arg88, Lys89, and Gln111; these read RIVLLK and YT. Positions 129, 133, and 137 each coordinate substrate. Residues 146 to 147 and Trp191 contribute to the FMN site; that span reads QS. 197–199 serves as a coordination point for substrate; it reads RLH. FMN is bound at residue Arg201.

This sequence belongs to the pyridoxamine 5'-phosphate oxidase family. As to quaternary structure, homodimer. The cofactor is FMN.

It carries out the reaction pyridoxamine 5'-phosphate + O2 + H2O = pyridoxal 5'-phosphate + H2O2 + NH4(+). The catalysed reaction is pyridoxine 5'-phosphate + O2 = pyridoxal 5'-phosphate + H2O2. It participates in cofactor metabolism; pyridoxal 5'-phosphate salvage; pyridoxal 5'-phosphate from pyridoxamine 5'-phosphate: step 1/1. The protein operates within cofactor metabolism; pyridoxal 5'-phosphate salvage; pyridoxal 5'-phosphate from pyridoxine 5'-phosphate: step 1/1. Its function is as follows. Catalyzes the oxidation of either pyridoxine 5'-phosphate (PNP) or pyridoxamine 5'-phosphate (PMP) into pyridoxal 5'-phosphate (PLP). The sequence is that of Pyridoxine/pyridoxamine 5'-phosphate oxidase from Salmonella typhi.